Here is a 394-residue protein sequence, read N- to C-terminus: Phosphoglycerate kinase (394 aa).

Residues 21–23, Arg-36, 59–62, Arg-118, and Arg-151 each bind substrate; these read DFN and HLGR. A Phosphoserine modification is found at Ser-183. Lys-201 and Gly-292 together coordinate ATP. A Phosphothreonine modification is found at Thr-299. ATP contacts are provided by residues Glu-323 and 350–353; that span reads GGDS.

This sequence belongs to the phosphoglycerate kinase family. In terms of assembly, monomer.

The protein resides in the cytoplasm. It carries out the reaction (2R)-3-phosphoglycerate + ATP = (2R)-3-phospho-glyceroyl phosphate + ADP. It functions in the pathway carbohydrate degradation; glycolysis; pyruvate from D-glyceraldehyde 3-phosphate: step 2/5. The sequence is that of Phosphoglycerate kinase from Anoxybacillus flavithermus (strain DSM 21510 / WK1).